Consider the following 361-residue polypeptide: Peptide chain release factor 1 (361 aa).

Gln-237 carries the N5-methylglutamine modification. Positions 287-297 (KQQKEQSDTRK) are enriched in basic and acidic residues. Residues 287–313 (KQQKEQSDTRKSLVGSGDRSERIRTYN) are disordered.

The protein belongs to the prokaryotic/mitochondrial release factor family. Methylated by PrmC. Methylation increases the termination efficiency of RF1.

The protein resides in the cytoplasm. Its function is as follows. Peptide chain release factor 1 directs the termination of translation in response to the peptide chain termination codons UAG and UAA. The polypeptide is Peptide chain release factor 1 (Francisella tularensis subsp. holarctica (strain FTNF002-00 / FTA)).